Here is a 176-residue protein sequence, read N- to C-terminus: Ribosome rescue factor SmrB (176 aa).

Positions 93-168 constitute a Smr domain; that stretch reads LDLHGYRQSE…GDAALLVLID (76 aa).

Belongs to the SmrB family. As to quaternary structure, associates with collided ribosomes, but not with correctly translating polysomes.

In terms of biological role, acts as a ribosome collision sensor. Detects stalled/collided disomes (pairs of ribosomes where the leading ribosome is stalled and a second ribosome has collided with it) and endonucleolytically cleaves mRNA at the 5' boundary of the stalled ribosome. Stalled/collided disomes form a new interface (primarily via the 30S subunits) that binds SmrB. Cleaved mRNA becomes available for tmRNA ligation, leading to ribosomal subunit dissociation and rescue of stalled ribosomes. In Shewanella sp. (strain ANA-3), this protein is Ribosome rescue factor SmrB.